A 366-amino-acid polypeptide reads, in one-letter code: Inhibin alpha chain (366 aa).

Residues 1-20 form the signal peptide; sequence MVIQPSLLLLLLLTLQDVDS. Residues 21–63 constitute a propeptide that is removed on maturation; sequence CQGPELVRELVLAKVKALFLDALGPPAMDGEGGGPGIRRLPRR. The propeptide at 64 to 233 is inhibin alpha N-terminal region; sequence HALGGFMHRT…APSAGERARR (170 aa). 2 N-linked (GlcNAc...) asparagine glycosylation sites follow: Asn147 and Asn269. 3 disulfides stabilise this stretch: Cys263–Cys328, Cys292–Cys363, and Cys296–Cys365.

The protein belongs to the TGF-beta family. In terms of assembly, dimeric, linked by one or more disulfide bonds. Activin B is a dimer of alpha and beta-B. Inhibin A is a dimer of alpha and beta-A. Inhibin B is a dimer of alpha and beta-B. Interacts with TGFBR3L; this interaction regulates female fertility. In terms of processing, proteolytic processing yields a number of bioactive forms, consisting either solely of the mature alpha chain, of the most N-terminal propeptide linked through a disulfide bond to the mature alpha chain, or of the entire proprotein. Mainly expressed in ovary and testis. Alpha- and beta-B-subunits are the predominant forms found in testis. Also found in placenta, pituitary, adrenal gland, bone marrow, kidney, spinal cord and brain.

It localises to the secreted. In terms of biological role, inhibins and activins inhibit and activate, respectively, the secretion of follitropin by the pituitary gland. Inhibins/activins are involved in regulating a number of diverse functions such as hypothalamic and pituitary hormone secretion, gonadal hormone secretion, germ cell development and maturation, erythroid differentiation, insulin secretion, nerve cell survival, embryonic axial development or bone growth, depending on their subunit composition. Inhibins appear to oppose the functions of activins. Inhibin A is a dimer of alpha/INHA and beta-A/INHBA that functions as a feedback regulator in the hypothalamic-pituitary-gonadal (HPG) axis. Inhibits the secretion of FSH from the anterior pituitary gland by acting on pituitary gonadotrope cells. Antagonizes activin A by binding to the proteoglycan, betaglycan, and forming a stable complex with and, thereby, sequestering type II activin receptors while excluding type I receptor. Its function is as follows. Inhibin B is a dimer of alpha and beta-B that plays a crucial role in the regulation of the reproductive system by inhibiting the secretion of follicle-stimulating hormone (FSH) from the anterior pituitary gland. Thereby, maintains reproductive homeostasis in both males and females. Acts as a more potent suppressor of FSH release than inhibin A. Functions as competitive receptor antagonist binding activin type II receptors with high affinity in the presence of the TGF-beta type III coreceptor/TGFBR3L. The protein is Inhibin alpha chain (Inha) of Rattus norvegicus (Rat).